A 132-amino-acid polypeptide reads, in one-letter code: RING-H2 finger protein ATL39 (132 aa).

A helical transmembrane segment spans residues Thr-10–Ile-30. The RING-type; atypical zinc finger occupies Cys-85–Arg-127.

This sequence belongs to the RING-type zinc finger family. ATL subfamily.

It is found in the membrane. It carries out the reaction S-ubiquitinyl-[E2 ubiquitin-conjugating enzyme]-L-cysteine + [acceptor protein]-L-lysine = [E2 ubiquitin-conjugating enzyme]-L-cysteine + N(6)-ubiquitinyl-[acceptor protein]-L-lysine.. Its pathway is protein modification; protein ubiquitination. The polypeptide is RING-H2 finger protein ATL39 (ATL39) (Arabidopsis thaliana (Mouse-ear cress)).